Reading from the N-terminus, the 351-residue chain is Sulfate/thiosulfate import ATP-binding protein CysA (351 aa).

In terms of domain architecture, ABC transporter spans 5-235; that stretch reads IVVADATKRY…PANAFVMSFL (231 aa). 37–44 is a binding site for ATP; it reads GPSGSGKS.

Belongs to the ABC transporter superfamily. Sulfate/tungstate importer (TC 3.A.1.6) family. In terms of assembly, the complex is composed of two ATP-binding proteins (CysA), two transmembrane proteins (CysT and CysW) and a solute-binding protein (CysP).

It localises to the cell membrane. It catalyses the reaction sulfate(out) + ATP + H2O = sulfate(in) + ADP + phosphate + H(+). The catalysed reaction is thiosulfate(out) + ATP + H2O = thiosulfate(in) + ADP + phosphate + H(+). Its function is as follows. Part of the ABC transporter complex CysAWTP involved in sulfate/thiosulfate import. Responsible for energy coupling to the transport system. The protein is Sulfate/thiosulfate import ATP-binding protein CysA of Mycobacterium bovis (strain ATCC BAA-935 / AF2122/97).